Reading from the N-terminus, the 720-residue chain is Inactive serine protease PAMR1 (720 aa).

The N-terminal stretch at 1–21 (MELGCWTQLGLTFLQLLLISS) is a signal peptide. 9 cysteine pairs are disulfide-bonded: C128–C150, C177–C199, C239–C250, C244–C260, C262–C271, C280–C329, C315–C342, C414–C442, and C489–C505. Positions 128-236 (CGQVLRAPKG…DGFHAIYEEI (109 aa)) constitute a CUB domain. Positions 235–272 (EITACSSSPCFHDGTCVLDKAGSYKCACLAGYTGQRCE) constitute an EGF-like domain. Sushi domains are found at residues 278–344 (RNCS…ICIK) and 387–444 (APTK…SCIP). Residues 445 to 720 (ICGKIENITA…FKDWIERNMK (276 aa)) form the Peptidase S1 domain. Residue N614 is glycosylated (N-linked (GlcNAc...) asparagine). 2 cysteine pairs are disulfide-bonded: C630-C649 and C661-C697.

Belongs to the peptidase S1 family.

The protein resides in the secreted. Its function is as follows. May play a role in regeneration of skeletal muscle. In Homo sapiens (Human), this protein is Inactive serine protease PAMR1 (PAMR1).